The following is a 95-amino-acid chain: Small ribosomal subunit protein bS21 (95 aa).

The segment at 55 to 95 is disordered; that stretch reads RKLARKKMQREGLLPMKPKPVFGAGPGAGRGGPGAGARPPR. The segment covering 78–89 has biased composition (gly residues); the sequence is AGPGAGRGGPGA.

The protein belongs to the bacterial ribosomal protein bS21 family.

This is Small ribosomal subunit protein bS21 from Nitrobacter hamburgensis (strain DSM 10229 / NCIMB 13809 / X14).